We begin with the raw amino-acid sequence, 1252 residues long: MFKCPERVSVKKKEDILDLPNLIEIQIKSYKQFLQIGKLAEERDNIGLEEVFREIFPIKSYNEATILEYLSYNLGVPKYSPDECIRRGITYSVTLKVRFRLTDETGIKEEEVYMGTIPIMTDKGTFIINGAERVVVSQVHRSPGINFEQEKHSKGNILFSFRIIPYRGSWLEAIFDINDLIYIHIDRKKRRRKILAITFIRALGYSSDADIIEEFFQIEEHSLKSEKDFSFLVGKILADNVLDEASSLVYGKAGEKLSTAMLKRMLDANISTLKIAVEADENHPIIKMLAKDPTDSYEAALKDFYRRLRPGEPATLANARSTIMRLFFDPKRYNLGRVGRYKLNRKLGFPMDEESLAQVTLRKEDVIGALKYLIRLKMGDEKASIDDIDHLANRRVRSVGELIQNQCRSGLARMEKIIRERMNLFDFSSDTLIPGKIISAKGLASVLKDFFGRSQLSQFMDQTNPVAELTHKRRLSALGPGGLNRERAGFEVRDVHASHYGRICPIETPEGPNIGLITSLSSFAKINEFGFIETPYRIVRDGVVTDEIEYMTADVEEECVIAQASANLDEYNMFVDPVCWARYRGEAFEADTSTVTHMDVSPKQLVSIVTGLIPFLEHDDANRALMGSNMQRQAVPLLKTEAPIVGTGLEARAAKDSGAIVVAEEDGVVEYVDGYKVVIAAKHHPTLKRTYDLKKFLRSNSGTCINQRPLCSVGDVVVKGDVIADGPATDKGELALGKNILVAFMPWYGYNFEDAIIISEKLIKQDAYTSIYIEEFELTARDTKLGKEEITRDIPNVSEEVLANLGEDGIIRIGAEVKPGDILVGKITPKSETELAPEERLLRAIFGEKAADVKDASLTVPPGTEGVVMDVKVFSRKDRLSKSDDELVEEAVHLKDLQKGYKNQISVLKIEYREKLGALLLNEKAPASIIHRRTADILVQEGTVFDQETIELLEQESLVDLLMPPCDMYDVLKSLLSDYETSLQRLEVNYKTEVEHIREGDADLDHGVIRQVKVYVASKRKLQVGDKMAGRHGNKGVVSKIVPEADMPYLANGETVQMILNPLGVPSRMNLGQVLETHLGYAAKTAGIHVKTPVFEGFPESRIWDMMIEQGLPADGKSYLYDGKTGERFDNTVVIGYIYMLKLSHLIADKIHARSIGPYSLVTQQPLGGKAQMGGQRFGEMEVWALEAYGVAHMLQEILTVKSDDVTGRTRIYESIVKGENLLKSGTPESFNVLIKEMQGLGLDVRPMVVDA.

This sequence belongs to the RNA polymerase beta chain family. The RNAP catalytic core consists of 2 alpha, 1 beta, 1 beta' and 1 omega subunit. When a sigma factor is associated with the core the holoenzyme is formed, which can initiate transcription.

The catalysed reaction is RNA(n) + a ribonucleoside 5'-triphosphate = RNA(n+1) + diphosphate. Functionally, DNA-dependent RNA polymerase catalyzes the transcription of DNA into RNA using the four ribonucleoside triphosphates as substrates. This chain is DNA-directed RNA polymerase subunit beta, found in Chlamydia abortus (strain DSM 27085 / S26/3) (Chlamydophila abortus).